A 60-amino-acid chain; its full sequence is Small, acid-soluble spore protein H (60 aa).

It belongs to the SspH family.

The protein resides in the spore core. The sequence is that of Small, acid-soluble spore protein H from Bacillus velezensis (strain DSM 23117 / BGSC 10A6 / LMG 26770 / FZB42) (Bacillus amyloliquefaciens subsp. plantarum).